The sequence spans 65 residues: DNA gyrase inhibitor YacG (65 aa).

The Zn(2+) site is built by Cys10, Cys13, Cys29, and Cys33. The interval 45-65 (EKAIPGAPDMSDSDGWSEDQY) is disordered. Residues 55-65 (SDSDGWSEDQY) show a composition bias toward acidic residues.

This sequence belongs to the DNA gyrase inhibitor YacG family. In terms of assembly, interacts with GyrB. It depends on Zn(2+) as a cofactor.

Its function is as follows. Inhibits all the catalytic activities of DNA gyrase by preventing its interaction with DNA. Acts by binding directly to the C-terminal domain of GyrB, which probably disrupts DNA binding by the gyrase. The chain is DNA gyrase inhibitor YacG from Vibrio cholerae serotype O1 (strain ATCC 39315 / El Tor Inaba N16961).